Here is a 389-residue protein sequence, read N- to C-terminus: Phosphopentomutase (389 aa).

The Mn(2+) site is built by Asp-10, Asp-282, His-287, Asp-323, His-324, and His-335.

The protein belongs to the phosphopentomutase family. Requires Mn(2+) as cofactor.

The protein resides in the cytoplasm. It catalyses the reaction 2-deoxy-alpha-D-ribose 1-phosphate = 2-deoxy-D-ribose 5-phosphate. It carries out the reaction alpha-D-ribose 1-phosphate = D-ribose 5-phosphate. The protein operates within carbohydrate degradation; 2-deoxy-D-ribose 1-phosphate degradation; D-glyceraldehyde 3-phosphate and acetaldehyde from 2-deoxy-alpha-D-ribose 1-phosphate: step 1/2. In terms of biological role, isomerase that catalyzes the conversion of deoxy-ribose 1-phosphate (dRib-1-P) and ribose 1-phosphate (Rib-1-P) to deoxy-ribose 5-phosphate (dRib-5-P) and ribose 5-phosphate (Rib-5-P), respectively. The chain is Phosphopentomutase from Clostridium kluyveri (strain NBRC 12016).